A 239-amino-acid chain; its full sequence is RNA chaperone ProQ (239 aa).

The disordered stretch occupies residues Lys-107–Ala-177. Basic and acidic residues predominate over residues Ala-115–Thr-137.

It belongs to the ProQ family.

The protein localises to the cytoplasm. Functionally, RNA chaperone with significant RNA binding, RNA strand exchange and RNA duplexing activities. May regulate ProP activity through an RNA-based, post-transcriptional mechanism. This Photorhabdus laumondii subsp. laumondii (strain DSM 15139 / CIP 105565 / TT01) (Photorhabdus luminescens subsp. laumondii) protein is RNA chaperone ProQ.